Reading from the N-terminus, the 182-residue chain is Alpha-S2-casein (182 aa).

The signal sequence occupies residues 1–15 (MKFFIFTCLLAVALA). Residues S22, S23, and S24 each carry the phosphoserine modification.

This sequence belongs to the alpha-casein family. As to expression, mammary gland specific. Secreted in milk.

The protein localises to the secreted. Its function is as follows. Important role in the capacity of milk to transport calcium phosphate. The sequence is that of Alpha-S2-casein (CSN1S2) from Oryctolagus cuniculus (Rabbit).